The primary structure comprises 235 residues: Ubiquinone/menaquinone biosynthesis C-methyltransferase UbiE (235 aa).

S-adenosyl-L-methionine is bound by residues Thr-60, Asp-80, 106–107 (DV), and Ser-123.

The protein belongs to the class I-like SAM-binding methyltransferase superfamily. MenG/UbiE family.

It carries out the reaction a 2-demethylmenaquinol + S-adenosyl-L-methionine = a menaquinol + S-adenosyl-L-homocysteine + H(+). The catalysed reaction is a 2-methoxy-6-(all-trans-polyprenyl)benzene-1,4-diol + S-adenosyl-L-methionine = a 5-methoxy-2-methyl-3-(all-trans-polyprenyl)benzene-1,4-diol + S-adenosyl-L-homocysteine + H(+). Its pathway is quinol/quinone metabolism; menaquinone biosynthesis; menaquinol from 1,4-dihydroxy-2-naphthoate: step 2/2. It participates in cofactor biosynthesis; ubiquinone biosynthesis. In terms of biological role, methyltransferase required for the conversion of demethylmenaquinol (DMKH2) to menaquinol (MKH2) and the conversion of 2-polyprenyl-6-methoxy-1,4-benzoquinol (DDMQH2) to 2-polyprenyl-3-methyl-6-methoxy-1,4-benzoquinol (DMQH2). This is Ubiquinone/menaquinone biosynthesis C-methyltransferase UbiE from Bdellovibrio bacteriovorus (strain ATCC 15356 / DSM 50701 / NCIMB 9529 / HD100).